An 80-amino-acid chain; its full sequence is uncharacterized protein (80 aa).

An N-terminal signal peptide occupies residues 1–23 (MKWNNMLKAAGIAVLLFSVFAYA).

This is an uncharacterized protein from Bacillus subtilis (strain 168).